Consider the following 91-residue polypeptide: Protein YchS (91 aa).

The sequence is that of Protein YchS (ychS) from Escherichia coli O157:H7.